A 387-amino-acid chain; its full sequence is Glucose-1-phosphate adenylyltransferase (387 aa).

Residues Tyr99, Gly164, 179–180, and Ser190 contribute to the alpha-D-glucose 1-phosphate site; that span reads EK.

It belongs to the bacterial/plant glucose-1-phosphate adenylyltransferase family. In terms of assembly, homotetramer.

It catalyses the reaction alpha-D-glucose 1-phosphate + ATP + H(+) = ADP-alpha-D-glucose + diphosphate. The protein operates within glycan biosynthesis; glycogen biosynthesis. In terms of biological role, involved in the biosynthesis of ADP-glucose, a building block required for the elongation reactions to produce glycogen. Catalyzes the reaction between ATP and alpha-D-glucose 1-phosphate (G1P) to produce pyrophosphate and ADP-Glc. This chain is Glucose-1-phosphate adenylyltransferase, found in Geobacillus stearothermophilus (Bacillus stearothermophilus).